The chain runs to 1011 residues: E3 ubiquitin-protein ligase mib1 (1011 aa).

Residues 6–74 enclose the MIB/HERC2 1 domain; the sequence is NNRVMVEGVG…AYDLRIMDSA (69 aa). The segment at 80–132 adopts a ZZ-type zinc-finger fold; that stretch reads HDGTMCDTCRQQPIIGIRWKCAECTNYDLCTVCYHGDKHHLRHRFYRITTPGS. Zn(2+)-binding residues include Cys85, Cys88, Cys100, Cys103, Cys109, Cys112, His118, and His122. The region spanning 143-221 is the MIB/HERC2 2 domain; sequence SKKITARGIF…MSDLKCVQDA (79 aa). ANK repeat units follow at residues 430-460, 463-492, 496-525, 529-558, 562-591, 595-627, 631-661, 665-694, and 698-729; these read DLNEELVKAAANGDVAKVDDLLKRQDVDVNG, AGHTAMQAASQNGHVDILKLLLKHSVDVEA, DGDRAVHHAAFGDEGTVIEVLQRGGADLNA, RRQTPLHIAVNKGHLQVVKKLLDFSCHPSL, EGDTPLHDAISKKRDDILAVLLEAGADVTI, NGFNALHHAALRGNPSAMRVLLSKLPRPWIVDE, DGYTALHLAALNNHVEVAELLVHQGSANLDI, NQQTALHLAVERQHTQIVRLLVRAEAKLDI, and DGDTPLHEALRHHTLSQLRQLQDMQDVGKVDT. 2 consecutive RING-type zinc fingers follow at residues 820–855 and 867–902; these read CMVCSDLKRDTLFGPCGHIATCSLCSPRVKKCLLCK and CVVCSDKKAAVLFQPCGHMCACENCASLMKKCVQCR. A coiled-coil region spans residues 936–963; it reads QKDKDNTNVNADVQKLQQQLQDIKEQTM. The RING-type 3 zinc-finger motif lies at 964-997; sequence CPVCLDRLKNMIFMCGHGTCQLCGDRMSECPICR.

Its subcellular location is the cytoplasm. It localises to the cytoskeleton. The protein resides in the microtubule organizing center. The protein localises to the centrosome. It is found in the centriolar satellite. The enzyme catalyses S-ubiquitinyl-[E2 ubiquitin-conjugating enzyme]-L-cysteine + [acceptor protein]-L-lysine = [E2 ubiquitin-conjugating enzyme]-L-cysteine + N(6)-ubiquitinyl-[acceptor protein]-L-lysine.. The protein operates within protein modification; protein ubiquitination. In terms of biological role, E3 ubiquitin-protein ligase that mediates ubiquitination of Delta receptors, which act as ligands of Notch proteins. Positively regulates the Delta-mediated Notch signaling by ubiquitinating the intracellular domain of Delta, leading to endocytosis of Delta receptors. The sequence is that of E3 ubiquitin-protein ligase mib1 (mib1) from Xenopus laevis (African clawed frog).